Here is a 378-residue protein sequence, read N- to C-terminus: Ribosomal RNA large subunit methyltransferase G (378 aa).

It belongs to the methyltransferase superfamily. RlmG family.

It is found in the cytoplasm. The catalysed reaction is guanosine(1835) in 23S rRNA + S-adenosyl-L-methionine = N(2)-methylguanosine(1835) in 23S rRNA + S-adenosyl-L-homocysteine + H(+). Functionally, specifically methylates the guanine in position 1835 (m2G1835) of 23S rRNA. This chain is Ribosomal RNA large subunit methyltransferase G, found in Salmonella dublin (strain CT_02021853).